Here is a 1390-residue protein sequence, read N- to C-terminus: Bromodomain adjacent to zinc finger domain protein 2 (1390 aa).

3 disordered regions span residues 30 to 67 (AKIQ…QNEA), 178 to 215 (AKKK…AANN), and 235 to 269 (QKQQ…DVKN). The segment covering 35-45 (ATASSPSKSTN) has biased composition (polar residues). Composition is skewed to low complexity over residues 46–63 (GTSA…TSSS) and 186–215 (ASTS…AANN). A compositionally biased stretch (basic and acidic residues) spans 243-269 (DTQKKADQAKKAKELAKQQQKEQDVKN). Positions 323–395 (KTNEAMLRLP…DNFLFNTKLV (73 aa)) constitute an MBD domain. Positions 524–588 (SQGFADALMV…LRLALEFPGM (65 aa)) constitute a DDT domain. Positions 705–724 (KEEQNHESDSEPPTRPDTPK) are enriched in basic and acidic residues. The interval 705–729 (KEEQNHESDSEPPTRPDTPKKATVA) is disordered. A PHD-type zinc finger spans residues 1100-1149 (EALCQICKSMDGDEMLVCDGCESGCHMECFRPRMTKVPEGDWFCQRCREE). A disordered region spans residues 1218-1241 (EERELEDDNHAENGENTKNGHMNG). Residues 1273-1377 (LPKNMNKELC…KFFQKRWKQL (105 aa)) enclose the Bromo domain.

It belongs to the WAL family. In terms of assembly, interacts with set-6. In terms of tissue distribution, broadly expressed in the nervous system, including head, body and tail neurons.

Its subcellular location is the nucleus. It localises to the chromosome. Chromatin reader protein, involved in positively modulating the rate of age-related behavioral deterioration. Positively modulates the level of global trimethylated 'Lys-9' of histone H3 (H3K9me3), but not of H3K9me2 or H3K9me1. May repress the expression of mitochondrial function-related genes by occupying their promoter regions, working in concert with histone methyltransferase, set-6. Involved in modulation of the mitochondrial unfolded protein response (UPR). Negatively regulates expression of bas-1, a serotonin (5-HT) and dopamine synthesizing enzyme (DOPA decarboxylase), with aging. Negatively modulates levels of endogenous 5-HT and dopamine with aging. Involved in modulating longevity, probably as a result of enhanced stress resistance via mechanisms related to dietary restriction and mitochondrial function. The sequence is that of Bromodomain adjacent to zinc finger domain protein 2 from Caenorhabditis elegans.